Here is a 696-residue protein sequence, read N- to C-terminus: Polyribonucleotide nucleotidyltransferase (696 aa).

Mg(2+)-binding residues include Asp483 and Asp489. A KH domain is found at 550–609 (PRITTIYVKTDKIRDVIGSGGKNIRGITEATGVTIDIDDTGKINIASTDKAACDLAIKMI). One can recognise an S1 motif domain in the interval 619–687 (GKLYMGLVKK…KQGKIKLSRK (69 aa)).

It belongs to the polyribonucleotide nucleotidyltransferase family. The cofactor is Mg(2+).

It localises to the cytoplasm. The enzyme catalyses RNA(n+1) + phosphate = RNA(n) + a ribonucleoside 5'-diphosphate. Its function is as follows. Involved in mRNA degradation. Catalyzes the phosphorolysis of single-stranded polyribonucleotides processively in the 3'- to 5'-direction. The polypeptide is Polyribonucleotide nucleotidyltransferase (Geotalea uraniireducens (strain Rf4) (Geobacter uraniireducens)).